The chain runs to 204 residues: Tic20 family protein Ycf60 (204 aa).

The next 4 membrane-spanning stretches (helical) occupy residues 5 to 25 (LPSLIIIMLTTFSIILISFII), 87 to 107 (LMPLVIFYVTHPTLAVIIFFI), 133 to 153 (ILLFLINSLLGATFRALPIEF), and 159 to 179 (GLMMCNTLFWFVLSTISYSII).

The protein belongs to the Tic20 family.

It localises to the plastid. The protein resides in the chloroplast membrane. This is Tic20 family protein Ycf60 (ycf60) from Gracilaria tenuistipitata var. liui (Red alga).